A 386-amino-acid chain; its full sequence is 17-hydroxy-3-oxo-4-pregnene-20-carboxyl-CoA lyase (386 aa).

The Proton acceptor role is filled by Y292. The active-site Proton donor is the Y342.

It belongs to the thiolase-like superfamily. In terms of assembly, homodimer. Interacts with the ChsH1/ChsH2 hydratase via the DUF35 C-terminal region of ChsH2 (ChsH2-DUF35). The ChsH1-ChsH2-Ltp2 protein complex is composed of two protomers that form a heterohexameric structure through the Ltp2 dimerization interface.

It carries out the reaction 17-hydroxy-3-oxochol-4-en-22-oyl-CoA = androst-4-ene-3,17-dione + propanoyl-CoA. It functions in the pathway steroid metabolism; cholesterol degradation. In terms of biological role, involved in cholesterol side chain degradation. When associated with the ChsH1/ChsH2 hydratase, catalyzes the retroaldol cleavage of 17-hydroxy-3-oxo-4-pregnene-20-carboxyl-CoA (17-HOPC-CoA) produced by the hydratase, forming androst-4-ene-3,17-dione and propionyl-CoA. The chain is 17-hydroxy-3-oxo-4-pregnene-20-carboxyl-CoA lyase from Mycobacterium tuberculosis (strain ATCC 25618 / H37Rv).